The following is a 161-amino-acid chain: Nuclear transcription factor Y subunit B-3 (161 aa).

The segment at 1–23 (MADSDNDSGGHKDGGNASTREQD) is disordered. Ala2 carries the N-acetylalanine modification. Residues 8-23 (SGGHKDGGNASTREQD) show a composition bias toward basic and acidic residues. Residues 26-32 (LPIANVS) mediate DNA binding. A subunit association domain (SAD) region spans residues 53–64 (VQECVSEFISFI). The disordered stretch occupies residues 114–146 (EKTTTAGRQGDKEGGGGGGGAGSGSGGAPMYGG). Residues 128–146 (GGGGGGAGSGSGGAPMYGG) are compositionally biased toward gly residues.

Belongs to the NFYB/HAP3 subunit family. In terms of assembly, heterotrimeric transcription factor composed of three components, NF-YA, NF-YB and NF-YC. NF-YB and NF-YC must interact and dimerize for NF-YA association and DNA binding. Component of a heat stress-inducible transcriptional complex with NF-YA and NF-YB subunits made, at least, of NFYA2, NFYB3 and DPB3-1 in cooperation with DREB2A. Binds directly with DPB3-1. Ubiquitous. Expressed in seedlings, petioles, hypocotyls, reproductive organ tissues and leaves.

It localises to the nucleus. The protein resides in the cytoplasm. The protein localises to the cytosol. Functionally, component of the NF-Y/HAP transcription factor complex. The NF-Y complex stimulates the transcription of various genes by recognizing and binding to a CCAAT motif in promoters. Promotes the expression of heat stress-inducible genes by contributing to the formation of a heat stress-specific transcriptional complex with NF-Y subunits (e.g. DPB3-1, NF-YA2 and NF-YB3) and DREB2A at the promoter of target genes, thus promoting heat tolerance. The chain is Nuclear transcription factor Y subunit B-3 from Arabidopsis thaliana (Mouse-ear cress).